A 330-amino-acid polypeptide reads, in one-letter code: ADP-L-glycero-D-manno-heptose-6-epimerase (330 aa).

NADP(+) contacts are provided by residues 11–12, 32–33, K39, K54, 75–79, and N92; these read FI, DN, and EGACS. Y139 serves as the catalytic Proton acceptor. Position 143 (K143) interacts with NADP(+). Substrate is bound at residue N168. NADP(+) contacts are provided by V169 and K177. K177 (proton acceptor) is an active-site residue. Residues R179, H186, 200–203, R213, and Y292 contribute to the substrate site; that span reads FGEY.

This sequence belongs to the NAD(P)-dependent epimerase/dehydratase family. HldD subfamily. As to quaternary structure, homopentamer. It depends on NADP(+) as a cofactor.

The enzyme catalyses ADP-D-glycero-beta-D-manno-heptose = ADP-L-glycero-beta-D-manno-heptose. Its pathway is nucleotide-sugar biosynthesis; ADP-L-glycero-beta-D-manno-heptose biosynthesis; ADP-L-glycero-beta-D-manno-heptose from D-glycero-beta-D-manno-heptose 7-phosphate: step 4/4. Catalyzes the interconversion between ADP-D-glycero-beta-D-manno-heptose and ADP-L-glycero-beta-D-manno-heptose via an epimerization at carbon 6 of the heptose. The polypeptide is ADP-L-glycero-D-manno-heptose-6-epimerase (Burkholderia ambifaria (strain MC40-6)).